The sequence spans 1557 residues: Ras guanine nucleotide exchange factor K (1557 aa).

Residues 1–16 (MEPTINPPVNLPPPVP) are compositionally biased toward pro residues. Disordered stretches follow at residues 1-121 (MEPT…SYTV), 146-181 (VETL…KLSV), 195-238 (LYQQ…SPQL), 283-347 (SPLP…GLTP), 558-619 (NNNN…DELS), and 881-937 (TNNN…QVNH). Composition is skewed to low complexity over residues 17–40 (SRSN…NNTN), 52–63 (SSPSSPSSPSPS), 73–90 (NNNN…NGNV), 102–114 (ISSP…HTSS), 148–161 (TLSS…KTTT), 195–207 (LYQQ…NPNS), and 222–236 (PPSS…STSP). Residues 283–310 (SPLPPPPLTIPNKVPPLPMRLPPPPPPQ) show a composition bias toward pro residues. 2 coiled-coil regions span residues 310–338 (QQLD…SNST) and 591–629 (NNNN…EEEL). A compositionally biased stretch (low complexity) spans 311–333 (QLDQMYSNNNQQQQQQQQQQQNN). The span at 334–343 (ESNSTTTSEG) shows a compositional bias: polar residues. Composition is skewed to low complexity over residues 558–610 (NNNN…NNNN) and 881–928 (TNNN…TPTT). One can recognise an N-terminal Ras-GEF domain in the interval 1058–1177 (LNAEIDAATL…QIRNCILKRT (120 aa)). The segment at 1254-1303 (PSISQNTPSSPSLIPSSPRPITSSSSVSSSTLLKSPLSQQAKSRIPETKT) is disordered. A compositionally biased stretch (low complexity) spans 1261–1291 (PSSPSLIPSSPRPITSSSSVSSSTLLKSPLS). A Ras-GEF domain is found at 1316–1549 (DDEEIARQLT…YHLSLLKEPR (234 aa)).

Promotes the exchange of Ras-bound GDP by GTP. The protein is Ras guanine nucleotide exchange factor K (gefK) of Dictyostelium discoideum (Social amoeba).